The chain runs to 453 residues: Protein amnionless (453 aa).

An N-terminal signal peptide occupies residues 1-19; the sequence is MGVLGRVLLWLQLCALTQA. At 20 to 357 the chain is on the extracellular side; the sequence is VSKLWVPNTD…ESGAHVWGSS (338 aa). Asn35 carries N-linked (GlcNAc...) asparagine glycosylation. 6 disulfides stabilise this stretch: Cys43–Cys96, Cys137–Cys213, Cys205–Cys211, Cys223–Cys249, Cys234–Cys250, and Cys239–Cys253. The tract at residues 67–87 is interaction with CUBN; the sequence is SDMLLPLDGELVLASGAGFGV. A VWFC domain is found at 202–254; that stretch reads PEDCADPSGCVCGNAEAQPWICAALLQPLGGRCPQAACHSALRPQGQCCDLCG. A helical membrane pass occupies residues 358–378; the sequence is AAGLAGGVAAAVLLALLVLLV. Residues 379 to 453 lie on the Cytoplasmic side of the membrane; the sequence is APPLLRRAGR…PLFAGAEAEA (75 aa).

As to quaternary structure, interacts (via extracellular region) with CUBN/cubilin, giving rise to a huge complex containing one AMN chain and three CUBN chains. In terms of processing, N-glycosylated. A soluble form arises by proteolytic removal of the membrane anchor. Detected in proximal tubules in the kidney cortex (at protein level). Long isoforms are highly expressed in small intestine, colon and kidney (renal proximal tubule epithelial cells). Shorter isoforms are detected at lower levels in testis, thymus and peripheral blood leukocytes.

The protein resides in the apical cell membrane. It localises to the cell membrane. Its subcellular location is the endosome membrane. The protein localises to the membrane. It is found in the coated pit. The protein resides in the secreted. Functionally, membrane-bound component of the endocytic receptor formed by AMN and CUBN. Required for normal CUBN glycosylation and trafficking to the cell surface. The complex formed by AMN and CUBN is required for efficient absorption of vitamin B12. Required for normal CUBN-mediated protein transport in the kidney. The polypeptide is Protein amnionless (AMN) (Homo sapiens (Human)).